The chain runs to 361 residues: S-adenosylmethionine:tRNA ribosyltransferase-isomerase (361 aa).

This sequence belongs to the QueA family. In terms of assembly, monomer.

It localises to the cytoplasm. It catalyses the reaction 7-aminomethyl-7-carbaguanosine(34) in tRNA + S-adenosyl-L-methionine = epoxyqueuosine(34) in tRNA + adenine + L-methionine + 2 H(+). It participates in tRNA modification; tRNA-queuosine biosynthesis. In terms of biological role, transfers and isomerizes the ribose moiety from AdoMet to the 7-aminomethyl group of 7-deazaguanine (preQ1-tRNA) to give epoxyqueuosine (oQ-tRNA). This is S-adenosylmethionine:tRNA ribosyltransferase-isomerase from Rhizobium etli (strain ATCC 51251 / DSM 11541 / JCM 21823 / NBRC 15573 / CFN 42).